A 66-amino-acid chain; its full sequence is Large ribosomal subunit protein bL35 (66 aa).

The disordered stretch occupies residues 1–23 (MPKMKTHRASAKRFKRTANGGLK).

The protein belongs to the bacterial ribosomal protein bL35 family.

In Lactobacillus helveticus (strain DPC 4571), this protein is Large ribosomal subunit protein bL35.